The chain runs to 291 residues: Transmembrane protein 41B (291 aa).

Residues 1-39 (MAKGRVAERSQLGAHHTTPVGDGAAGTRGLAAPGSRDHQ) form a disordered region. Position 18 is a phosphothreonine (Thr-18). Ser-35 carries the phosphoserine modification. 6 helical membrane passes run 52 to 72 (MSLL…FLVY), 109 to 129 (FYVQ…TFAI), 147 to 169 (LALF…LSYL), 197 to 217 (LINY…FINI), 225 to 245 (PLKV…FVAI), and 262 to 282 (SWNS…PAIF). The VTT domain; required for its function in autophagy stretch occupies residues 140–251 (GFLYPFPLAL…FVAIKAGTTL (112 aa)).

It belongs to the TMEM41 family. Interacts with VMP1. Interacts with COPA, COPB1, VDAC1 and ERLIN2. Interacts with ATG2A. Interacts with SURF4. As to quaternary structure, (Microbial infection) Interacts with Zika virus NS4A protein and Yellow fever virus NS4B protein.

It localises to the endoplasmic reticulum membrane. Its subcellular location is the endomembrane system. The protein resides in the cytoplasm. It catalyses the reaction a 1,2-diacyl-sn-glycero-3-phospho-L-serine(in) = a 1,2-diacyl-sn-glycero-3-phospho-L-serine(out). The enzyme catalyses cholesterol(in) = cholesterol(out). It carries out the reaction a 1,2-diacyl-sn-glycero-3-phosphocholine(in) = a 1,2-diacyl-sn-glycero-3-phosphocholine(out). The catalysed reaction is a 1,2-diacyl-sn-glycero-3-phosphoethanolamine(in) = a 1,2-diacyl-sn-glycero-3-phosphoethanolamine(out). Functionally, phospholipid scramblase involved in lipid homeostasis and membrane dynamics processes. Has phospholipid scramblase activity toward cholesterol and phosphatidylserine, as well as phosphatidylethanolamine and phosphatidylcholine. Required for autophagosome formation: participates in early stages of autophagosome biogenesis at the endoplasmic reticulum (ER) membrane by reequilibrating the leaflets of the ER as lipids are extracted by ATG2 (ATG2A or ATG2B) to mediate autophagosome assembly. In addition to autophagy, involved in other processes in which phospholipid scramblase activity is required. Required for normal motor neuron development. (Microbial infection) Critical host factor required for infection by human coronaviruses SARS-CoV-2, HCoV-OC43, HCoV-NL63, and HCoV-229E, as well as all flaviviruses tested such as Zika virus and Yellow fever virus. Required post-entry of the virus to facilitate the ER membrane remodeling necessary to form replication organelles. The polypeptide is Transmembrane protein 41B (Homo sapiens (Human)).